A 185-amino-acid polypeptide reads, in one-letter code: Class I hydrophobin SC6 (185 aa).

Positions 1–17 are cleaved as a signal peptide; that stretch reads MVSRVLALISVAMLVGA. The tract at residues 70 to 104 is disordered; the sequence is HIPEVTGSSTEEATSSSTWSGASSKPTDSAPTQCN. Positions 75 to 93 are enriched in low complexity; that stretch reads TGSSTEEATSSSTWSGASS. A compositionally biased stretch (polar residues) spans 94–104; the sequence is KPTDSAPTQCN. Cystine bridges form between C103/C164, C110/C158, C111/C144, and C165/C178.

It belongs to the fungal hydrophobin family. As to quaternary structure, self-assembles to form functional amyloid fibrils called rodlets. Self-assembly into fibrillar rodlets occurs spontaneously at hydrophobic:hydrophilic interfaces and the rodlets further associate laterally to form amphipathic monolayers.

It localises to the secreted. The protein localises to the cell wall. Aerial growth, conidiation, and dispersal of filamentous fungi in the environment rely upon a capability of their secreting small amphipathic proteins called hydrophobins (HPBs) with low sequence identity. Class I can self-assemble into an outermost layer of rodlet bundles on aerial cell surfaces, conferring cellular hydrophobicity that supports fungal growth, development and dispersal; whereas Class II form highly ordered films at water-air interfaces through intermolecular interactions but contribute nothing to the rodlet structure. SC6 is a dikaryon-specific class I hydrophobin that contributes to the formation of aerial hyphae and fruiting bodies. This is Class I hydrophobin SC6 from Schizophyllum commune (Split gill fungus).